A 1407-amino-acid polypeptide reads, in one-letter code: DNA-directed RNA polymerase subunit beta' (1407 aa).

The Zn(2+) site is built by cysteine 70, cysteine 72, cysteine 85, and cysteine 88. Mg(2+) is bound by residues aspartate 460, aspartate 462, and aspartate 464. 4 residues coordinate Zn(2+): cysteine 814, cysteine 888, cysteine 895, and cysteine 898.

The protein belongs to the RNA polymerase beta' chain family. As to quaternary structure, the RNAP catalytic core consists of 2 alpha, 1 beta, 1 beta' and 1 omega subunit. When a sigma factor is associated with the core the holoenzyme is formed, which can initiate transcription. Mg(2+) serves as cofactor. Zn(2+) is required as a cofactor.

The catalysed reaction is RNA(n) + a ribonucleoside 5'-triphosphate = RNA(n+1) + diphosphate. In terms of biological role, DNA-dependent RNA polymerase catalyzes the transcription of DNA into RNA using the four ribonucleoside triphosphates as substrates. The sequence is that of DNA-directed RNA polymerase subunit beta' from Buchnera aphidicola subsp. Acyrthosiphon pisum (strain APS) (Acyrthosiphon pisum symbiotic bacterium).